A 326-amino-acid polypeptide reads, in one-letter code: Target of rapamycin complex subunit LST8 (326 aa).

N-acetylmethionine is present on methionine 1. 5 WD repeats span residues 1-37 (MNTT…CTRT), 40-80 (HQDS…PIIS), 83-122 (GVSK…LQCQ), 126-165 (QVNA…NEQL), and 168-207 (EPES…GDDV). The residue at position 51 (threonine 51) is a Phosphothreonine. Lysine 86 is covalently cross-linked (Glycyl lysine isopeptide (Lys-Gly) (interchain with G-Cter in SUMO3)). Residues lysine 215, lysine 245, and lysine 261 each participate in a glycyl lysine isopeptide (Lys-Gly) (interchain with G-Cter in SUMO3) cross-link. A WD 6 repeat occupies 218 to 257 (AHTRYALQCRFSPDSTLLATCSADQTCKIWRTSNFSLMTE). A WD 7 repeat occupies 268–309 (SSRGWMWGCAFSGDSQYIVTASSDNLARLWCVETGEIKREYG). Residue lysine 305 forms a Glycyl lysine isopeptide (Lys-Gly) (interchain with G-Cter in SUMO3); alternate linkage. Residues lysine 305 and lysine 313 each participate in a glycyl lysine isopeptide (Lys-Gly) (interchain with G-Cter in ubiquitin); alternate cross-link. Residue lysine 313 forms a Glycyl lysine isopeptide (Lys-Gly) (interchain with G-Cter in SUMO1); alternate linkage.

This sequence belongs to the WD repeat LST8 family. In terms of assembly, part of the mechanistic target of rapamycin complex 1 (mTORC1) which contains MTOR, MLST8 and RPTOR. mTORC1 associates with AKT1S1/PRAS40, which inhibits its activity. mTORC1 binds to and is inhibited by FKBP12-rapamycin. Within mTORC1, interacts directly with MTOR and RPTOR. Component of the mechanistic target of rapamycin complex 2 (mTORC2), consisting in two heterotretramers composed of MTOR, MLST8, RICTOR and MAPKAP1/SIN1. Contrary to mTORC1, mTORC2 does not bind to and is not sensitive to FKBP12-rapamycin. mTORC1 and mTORC2 associate with DEPTOR, which regulates their activity. Interacts with RHEB. Interacts with MEAK7. Interacts with SIK3. Interacts with SLC38A7; this interaction promotes the recruitment of mTORC1 to the lysosome and its subsequent activation. Post-translationally, phosphorylation at Thr-51 by CDK1 promotes ubiquitination by the SCF(FBXW7) complex, followed by degradation. Ubiquitination by the SCF(FBXW7) and SCF(FBXW11) complexes following phosphorylation at Thr-51 by CDK1, leads to its degradation by the proteasome. Ubiquitination at Lys-305 and Lys-313 by TRAF2 via 'Lys-63'-linked polyubiquitin chains inhibits formation of the mTORC2 complex, while promoting formation of the mTORC1 complex: ubiquitination disrupts the interaction between MLST8 and MAPKAP1/SIN1 to favor mTORC1 assembly. Deubiquitination at Lys-305 and Lys-313 by OTUD7B promotes MLST8 interaction with MAPKAP1/SIN1, facilitating mTORC2 assembly. In terms of processing, sumoylation with SUMO1, SUMO2 and SUMO3 promotes assembly of both mTORC1 and mTORC2 complexes.

The protein resides in the lysosome membrane. Its subcellular location is the cytoplasm. Its function is as follows. Subunit of both mTORC1 and mTORC2, which regulates cell growth and survival in response to nutrient and hormonal signals. mTORC1 is activated in response to growth factors or amino acids. In response to nutrients, mTORC1 is recruited to the lysosome membrane and promotes protein, lipid and nucleotide synthesis by phosphorylating several substrates, such as ribosomal protein S6 kinase (RPS6KB1 and RPS6KB2) and EIF4EBP1 (4E-BP1). In the same time, it inhibits catabolic pathways by phosphorylating the autophagy initiation components ULK1 and ATG13, as well as transcription factor TFEB, a master regulators of lysosomal biogenesis and autophagy. The mTORC1 complex is inhibited in response to starvation and amino acid depletion. Within mTORC1, MLST8 interacts directly with MTOR and enhances its kinase activity. In nutrient-poor conditions, stabilizes the MTOR-RPTOR interaction and favors RPTOR-mediated inhibition of MTOR activity. As part of the mTORC2 complex, transduces signals from growth factors to pathways involved in proliferation, cytoskeletal organization, lipogenesis and anabolic output. mTORC2 is also activated by growth factors, but seems to be nutrient-insensitive. In response to growth factors, mTORC2 phosphorylates and activates AGC protein kinase family members, including AKT (AKT1, AKT2 and AKT3), PKC (PRKCA, PRKCB and PRKCE) and SGK1. mTORC2 functions upstream of Rho GTPases to regulate the actin cytoskeleton, probably by activating one or more Rho-type guanine nucleotide exchange factors. mTORC2 promotes the serum-induced formation of stress-fibers or F-actin. mTORC2 plays a critical role in AKT1 activation by mediating phosphorylation of different sites depending on the context, such as 'Thr-450', 'Ser-473', 'Ser-477' or 'Thr-479', facilitating the phosphorylation of the activation loop of AKT1 on 'Thr-308' by PDPK1/PDK1 which is a prerequisite for full activation. mTORC2 regulates the phosphorylation of SGK1 at 'Ser-422'. mTORC2 also modulates the phosphorylation of PRKCA on 'Ser-657'. Within mTORC2, MLST8 acts as a bridge between MAPKAP1/SIN1 and MTOR. This chain is Target of rapamycin complex subunit LST8, found in Mus musculus (Mouse).